Here is a 457-residue protein sequence, read N- to C-terminus: MSWSILEFLRKNPEELKNNLKRRAIDVSLVDKAVELDKKWRQVLQEVERLRHQHNVLSSQIPKLSGEERKKKIEESKNLLKILEDKEKELEKIEVERDRLLSSLPNLVADDVPNGPDDSYNIPIKFWGKFKVYEGDVEEFLRQTKDANVNYEIIKWKPKGHAEMLEDVLHLGNTLKAAEIAGSRFYYLFNDIVWLDFALLLFAIDYITQQGYTLVLPPYMLRGEVIQSVIDLDTFKDAIYKIENEDLYLIATAEHSVAAMFFKEEIEKDKLPLKFAGISPAFRKEAGAANKDLKGIFRVHQFHKVEQFIFSTPEDSWKYHAELITNAESIFQQLELPYRIVNIASGDLGACAAKKFDLEVWMPAQAKFREMVSCSNCTDWQAFRMKIRYVDRKNNKRGYVHTLNSTAIASTRTITAILENYQREDGVVEVPKVLRKYLEIFPKAPKDYIYPLKNKII.

Residue 252–254 (TAE) participates in L-serine binding. ATP is bound by residues 283–285 (RKE) and Val299. Residue Glu306 coordinates L-serine. 370-373 (EMVS) is an ATP binding site. Thr406 is a binding site for L-serine.

This sequence belongs to the class-II aminoacyl-tRNA synthetase family. Type-1 seryl-tRNA synthetase subfamily. Homodimer. The tRNA molecule binds across the dimer.

The protein resides in the cytoplasm. It catalyses the reaction tRNA(Ser) + L-serine + ATP = L-seryl-tRNA(Ser) + AMP + diphosphate + H(+). The enzyme catalyses tRNA(Sec) + L-serine + ATP = L-seryl-tRNA(Sec) + AMP + diphosphate + H(+). It participates in aminoacyl-tRNA biosynthesis; selenocysteinyl-tRNA(Sec) biosynthesis; L-seryl-tRNA(Sec) from L-serine and tRNA(Sec): step 1/1. Functionally, catalyzes the attachment of serine to tRNA(Ser). Is also able to aminoacylate tRNA(Sec) with serine, to form the misacylated tRNA L-seryl-tRNA(Sec), which will be further converted into selenocysteinyl-tRNA(Sec). The polypeptide is Serine--tRNA ligase (Saccharolobus islandicus (strain M.14.25 / Kamchatka #1) (Sulfolobus islandicus)).